The sequence spans 202 residues: CASP-like protein 1U4 (202 aa).

The Cytoplasmic segment spans residues 1–10 (MCLPAKWLHP). Residues 11–31 (VSLIFRVAGIGLAAVSAAAML) traverse the membrane as a helical segment. The Extracellular portion of the chain corresponds to 32 to 56 (TASQCTVYADYGWRPRTVTYSDFPA). A helical membrane pass occupies residues 57 to 77 (FVYLVAATAIATLLEAVALFL). Topologically, residues 78–94 (SWSKKGKSKKSWRVLTM) are cytoplasmic. Residues 95-115 (LLLGAVVPALLYTSAGAAFAV) traverse the membrane as a helical segment. Residues 116–146 (GWEDIYYYLEPIGRRFSVCRSSVAGGRFCEH) are Extracellular-facing. The helical transmembrane segment at 147 to 167 (VHVSMWLALGAAVAVSFAEFL) threads the bilayer. Residues 168–202 (TTFRWCHGSGSCSDSDSDSDSDSESGCGHGCHCKH) are Cytoplasmic-facing.

The protein belongs to the Casparian strip membrane proteins (CASP) family. Homodimer and heterodimers.

Its subcellular location is the cell membrane. This Sorghum bicolor (Sorghum) protein is CASP-like protein 1U4.